Reading from the N-terminus, the 161-residue chain is ATP synthase subunit b (161 aa).

The helical transmembrane segment at 12 to 32 threads the bilayer; that stretch reads IAFFLFVFFCMKYIWPNLISL.

This sequence belongs to the ATPase B chain family. F-type ATPases have 2 components, F(1) - the catalytic core - and F(0) - the membrane proton channel. F(1) has five subunits: alpha(3), beta(3), gamma(1), delta(1), epsilon(1). F(0) has three main subunits: a(1), b(2) and c(10-14). The alpha and beta chains form an alternating ring which encloses part of the gamma chain. F(1) is attached to F(0) by a central stalk formed by the gamma and epsilon chains, while a peripheral stalk is formed by the delta and b chains.

It localises to the cell membrane. In terms of biological role, f(1)F(0) ATP synthase produces ATP from ADP in the presence of a proton or sodium gradient. F-type ATPases consist of two structural domains, F(1) containing the extramembraneous catalytic core and F(0) containing the membrane proton channel, linked together by a central stalk and a peripheral stalk. During catalysis, ATP synthesis in the catalytic domain of F(1) is coupled via a rotary mechanism of the central stalk subunits to proton translocation. Functionally, component of the F(0) channel, it forms part of the peripheral stalk, linking F(1) to F(0). This is ATP synthase subunit b from Wigglesworthia glossinidia brevipalpis.